Here is a 285-residue protein sequence, read N- to C-terminus: 3-methyl-2-oxobutanoate hydroxymethyltransferase (285 aa).

The tract at residues methionine 1–arginine 22 is disordered. Positions glycine 8–proline 21 are enriched in low complexity. The Mg(2+) site is built by aspartate 66 and aspartate 105. Residues aspartate 66–serine 67, aspartate 105, and lysine 135 each bind 3-methyl-2-oxobutanoate. Glutamate 137 is a binding site for Mg(2+). Residue glutamate 203 is the Proton acceptor of the active site.

It belongs to the PanB family. As to quaternary structure, homodecamer; pentamer of dimers. Requires Mg(2+) as cofactor.

It is found in the cytoplasm. The catalysed reaction is 3-methyl-2-oxobutanoate + (6R)-5,10-methylene-5,6,7,8-tetrahydrofolate + H2O = 2-dehydropantoate + (6S)-5,6,7,8-tetrahydrofolate. The protein operates within cofactor biosynthesis; (R)-pantothenate biosynthesis; (R)-pantoate from 3-methyl-2-oxobutanoate: step 1/2. Functionally, catalyzes the reversible reaction in which hydroxymethyl group from 5,10-methylenetetrahydrofolate is transferred onto alpha-ketoisovalerate to form ketopantoate. The chain is 3-methyl-2-oxobutanoate hydroxymethyltransferase from Mycolicibacterium paratuberculosis (strain ATCC BAA-968 / K-10) (Mycobacterium paratuberculosis).